The sequence spans 256 residues: Homeobox-leucine zipper protein HOX28 (256 aa).

The tract at residues 56-86 (ACSPGSPVSSGSGKRGSGSGSGDEVDDAGCD) is disordered. Residues 58–67 (SPGSPVSSGS) are compositionally biased toward low complexity. The homeobox DNA-binding region spans 91–150 (GARKKLRLSKDQAAVLEECFKTHHTLTPKQKVALAKSLNLRPRQVEVWFQNRRARTKLKQ). Positions 149–193 (KQTEVDCEHLKRWCDQLADDNRRLHKELAELRALKATPTPPAAAP) are leucine-zipper.

The protein belongs to the HD-ZIP homeobox family. Class II subfamily. Expressed in seedlings, roots, stems and panicles.

Its subcellular location is the nucleus. In terms of biological role, probable transcription factor. The protein is Homeobox-leucine zipper protein HOX28 (HOX28) of Oryza sativa subsp. indica (Rice).